The chain runs to 453 residues: C4-dicarboxylate TRAP transporter large permease protein DctM (453 aa).

13 helical membrane-spanning segments follow: residues 2-22, 50-70, 82-102, 104-124, 139-159, 172-192, 217-237, 243-263, 289-309, 326-346, 356-376, 380-400, and 417-437; these read AVALLFILVIGMMIVGVPIAI, AFAGHYTLLAIPFFILASTFM, FAIAMVGWFRGGLAIASVVAC, MFAALSGSSPATVVAIGSIVI, GVICNAGTLGILIPPSIVMVV, FLGGVVPGLLAGLMLIIAIYI, ASWGLLLVVIILGGIYGGIFT, AVAAVYSFFIANFIYRDMGPF, LYDAGKLTIMLMFIIANALIL, MLSAGLGPITFLIVVNLILLV, LLVIVAPLVFPIAIALGIDPI, IMMVVNMEIGMITPPVGLNLF, and ALPWVGVMFLFLIIVTYVPWV.

This sequence belongs to the TRAP transporter large permease family. The complex comprises the extracytoplasmic solute receptor protein DctP, and the two transmembrane proteins DctQ and DctM.

Its subcellular location is the cell inner membrane. In terms of biological role, part of the tripartite ATP-independent periplasmic (TRAP) transport system DctPQM involved in C4-dicarboxylates uptake. The chain is C4-dicarboxylate TRAP transporter large permease protein DctM from Vibrio cholerae serotype O1 (strain ATCC 39315 / El Tor Inaba N16961).